We begin with the raw amino-acid sequence, 288 residues long: Acetyl-coenzyme A carboxylase carboxyl transferase subunit beta (288 aa).

Residues Leu-34 to Ser-288 enclose the CoA carboxyltransferase N-terminal domain. 4 residues coordinate Zn(2+): Cys-38, Cys-41, Cys-56, and Cys-59. Residues Cys-38–Cys-59 form a C4-type zinc finger.

It belongs to the AccD/PCCB family. Acetyl-CoA carboxylase is a heterohexamer composed of biotin carboxyl carrier protein (AccB), biotin carboxylase (AccC) and two subunits each of ACCase subunit alpha (AccA) and ACCase subunit beta (AccD). Zn(2+) serves as cofactor.

The protein localises to the cytoplasm. The enzyme catalyses N(6)-carboxybiotinyl-L-lysyl-[protein] + acetyl-CoA = N(6)-biotinyl-L-lysyl-[protein] + malonyl-CoA. The protein operates within lipid metabolism; malonyl-CoA biosynthesis; malonyl-CoA from acetyl-CoA: step 1/1. Its function is as follows. Component of the acetyl coenzyme A carboxylase (ACC) complex. Biotin carboxylase (BC) catalyzes the carboxylation of biotin on its carrier protein (BCCP) and then the CO(2) group is transferred by the transcarboxylase to acetyl-CoA to form malonyl-CoA. In Streptococcus equi subsp. equi (strain 4047), this protein is Acetyl-coenzyme A carboxylase carboxyl transferase subunit beta.